The following is a 271-amino-acid chain: tRNA (guanine-N(1)-)-methyltransferase (271 aa).

S-adenosyl-L-methionine contacts are provided by residues glycine 120 and 145-150 (IGDYVL).

Belongs to the RNA methyltransferase TrmD family. As to quaternary structure, homodimer.

It is found in the cytoplasm. The enzyme catalyses guanosine(37) in tRNA + S-adenosyl-L-methionine = N(1)-methylguanosine(37) in tRNA + S-adenosyl-L-homocysteine + H(+). Its function is as follows. Specifically methylates guanosine-37 in various tRNAs. In Bifidobacterium longum subsp. infantis (strain ATCC 15697 / DSM 20088 / JCM 1222 / NCTC 11817 / S12), this protein is tRNA (guanine-N(1)-)-methyltransferase.